A 141-amino-acid chain; its full sequence is Large ribosomal subunit protein uL11 (141 aa).

Belongs to the universal ribosomal protein uL11 family. In terms of assembly, part of the ribosomal stalk of the 50S ribosomal subunit. Interacts with L10 and the large rRNA to form the base of the stalk. L10 forms an elongated spine to which L12 dimers bind in a sequential fashion forming a multimeric L10(L12)X complex. In terms of processing, one or more lysine residues are methylated.

Its function is as follows. Forms part of the ribosomal stalk which helps the ribosome interact with GTP-bound translation factors. The chain is Large ribosomal subunit protein uL11 from Opitutus terrae (strain DSM 11246 / JCM 15787 / PB90-1).